The primary structure comprises 73 residues: Antimicrobial peptide 6 (73 aa).

Residues 1–22 (MQIKHLITLFFLVLIVADQCSA) form the signal peptide. Positions 45 to 73 (EISTQIDQYRNLQKREAELEELLDRLPMY) are excised as a propeptide.

Belongs to the non-disulfide-bridged peptide (NDBP) superfamily. Short antimicrobial peptide (group 4) family. Expressed by the venom gland.

The protein localises to the secreted. Functionally, antibacterial peptide. This Tityus costatus (Brazilian scorpion) protein is Antimicrobial peptide 6.